Reading from the N-terminus, the 168-residue chain is Protein-export protein SecB (168 aa).

It belongs to the SecB family. In terms of assembly, homotetramer, a dimer of dimers. One homotetramer interacts with 1 SecA dimer.

The protein localises to the cytoplasm. Its function is as follows. One of the proteins required for the normal export of preproteins out of the cell cytoplasm. It is a molecular chaperone that binds to a subset of precursor proteins, maintaining them in a translocation-competent state. It also specifically binds to its receptor SecA. This chain is Protein-export protein SecB, found in Thioalkalivibrio sulfidiphilus (strain HL-EbGR7).